A 331-amino-acid polypeptide reads, in one-letter code: PTS-dependent dihydroxyacetone kinase 2, dihydroxyacetone-binding subunit DhaK (331 aa).

The 322-residue stretch at 7-328 (DGYEAVEEML…LDTPCDTPYF (322 aa)) folds into the DhaK domain. Dihydroxyacetone contacts are provided by residues 55-58 (GSGH) and D111. The Proton acceptor role is filled by H58. H218 functions as the Tele-hemiaminal-histidine intermediate in the catalytic mechanism.

As to quaternary structure, homodimer. The dihydroxyacetone kinase complex is composed of a homodimer of DhaM, a homodimer of DhaK and the subunit DhaL.

It localises to the cytoplasm. The enzyme catalyses dihydroxyacetone + phosphoenolpyruvate = dihydroxyacetone phosphate + pyruvate. Its pathway is polyol metabolism; glycerol degradation. Its function is as follows. Dihydroxyacetone binding subunit of the dihydroxyacetone kinase, which is responsible for the phosphoenolpyruvate (PEP)-dependent phosphorylation of dihydroxyacetone via a phosphoryl group transfer from DhaL-ATP. This chain is PTS-dependent dihydroxyacetone kinase 2, dihydroxyacetone-binding subunit DhaK, found in Listeria innocua serovar 6a (strain ATCC BAA-680 / CLIP 11262).